The following is a 300-amino-acid chain: Regulatory protein NocR (300 aa).

Residues 1–59 (MIQSRQLEAFRAVMLTGGMTSAANLVRITQPAISRLIRDLEEEIGISLFERTGNRLRPT) enclose the HTH lysR-type domain. The segment at residues 19-38 (MTSAANLVRITQPAISRLIR) is a DNA-binding region (H-T-H motif).

It belongs to the LysR transcriptional regulatory family.

Functionally, positive regulatory protein for the noc operon involved in nopaline catabolism and uptake. In Agrobacterium fabrum (strain C58 / ATCC 33970) (Agrobacterium tumefaciens (strain C58)), this protein is Regulatory protein NocR (nocR).